The chain runs to 475 residues: Glycogen synthase (475 aa).

Residue lysine 15 coordinates ADP-alpha-D-glucose.

This sequence belongs to the glycosyltransferase 1 family. Bacterial/plant glycogen synthase subfamily.

The catalysed reaction is [(1-&gt;4)-alpha-D-glucosyl](n) + ADP-alpha-D-glucose = [(1-&gt;4)-alpha-D-glucosyl](n+1) + ADP + H(+). It functions in the pathway glycan biosynthesis; glycogen biosynthesis. Functionally, synthesizes alpha-1,4-glucan chains using ADP-glucose. The sequence is that of Glycogen synthase from Alkaliphilus metalliredigens (strain QYMF).